We begin with the raw amino-acid sequence, 181 residues long: Adenine phosphoribosyltransferase (181 aa).

This sequence belongs to the purine/pyrimidine phosphoribosyltransferase family. In terms of assembly, homodimer.

It localises to the cytoplasm. The enzyme catalyses AMP + diphosphate = 5-phospho-alpha-D-ribose 1-diphosphate + adenine. It functions in the pathway purine metabolism; AMP biosynthesis via salvage pathway; AMP from adenine: step 1/1. In terms of biological role, catalyzes a salvage reaction resulting in the formation of AMP, that is energically less costly than de novo synthesis. This is Adenine phosphoribosyltransferase from Rhodopseudomonas palustris (strain ATCC BAA-98 / CGA009).